Consider the following 574-residue polypeptide: Polyamine aminopropyltransferase (574 aa).

Transmembrane regions (helical) follow at residues 22 to 42, 55 to 75, 90 to 110, 144 to 164, 188 to 208, 209 to 229, and 237 to 257; these read VLLL…EYLL, AAIY…AFAA, LTVA…IGFG, LPYF…PLIA, IGAG…DIQL, AAAL…WRFW, and LLLA…IQGP. Positions 254–510 are spermidine synthase; the sequence is IQGPSWEQQF…ATLDGKDAQH (257 aa). One can recognise a PABS domain in the interval 257–505; it reads PSWEQQFNNL…WGWSIATLDG (249 aa). Glutamine 281 provides a ligand contact to S-methyl-5'-thioadenosine. The spermidine site is built by histidine 317 and aspartate 341. S-methyl-5'-thioadenosine contacts are provided by residues aspartate 360 and 403-404; that span reads DA. Aspartate 424 (proton acceptor) is an active-site residue.

It belongs to the spermidine/spermine synthase family. Homodimer or homotetramer.

It localises to the cell membrane. The catalysed reaction is S-adenosyl 3-(methylsulfanyl)propylamine + putrescine = S-methyl-5'-thioadenosine + spermidine + H(+). The protein operates within amine and polyamine biosynthesis; spermidine biosynthesis; spermidine from putrescine: step 1/1. Catalyzes the irreversible transfer of a propylamine group from the amino donor S-adenosylmethioninamine (decarboxy-AdoMet) to putrescine (1,4-diaminobutane) to yield spermidine. This chain is Polyamine aminopropyltransferase, found in Shewanella oneidensis (strain ATCC 700550 / JCM 31522 / CIP 106686 / LMG 19005 / NCIMB 14063 / MR-1).